Consider the following 213-residue polypeptide: Kynurenine formamidase (213 aa).

A substrate-binding site is contributed by W18. Positions 48, 52, and 54 each coordinate Zn(2+). H58 (proton donor/acceptor) is an active-site residue. The Zn(2+) site is built by H160 and E172.

It belongs to the Cyclase 1 superfamily. KynB family. In terms of assembly, homodimer. Zn(2+) serves as cofactor.

The enzyme catalyses N-formyl-L-kynurenine + H2O = L-kynurenine + formate + H(+). Its pathway is amino-acid degradation; L-tryptophan degradation via kynurenine pathway; L-kynurenine from L-tryptophan: step 2/2. Catalyzes the hydrolysis of N-formyl-L-kynurenine to L-kynurenine, the second step in the kynurenine pathway of tryptophan degradation. The polypeptide is Kynurenine formamidase (Burkholderia ambifaria (strain MC40-6)).